The sequence spans 513 residues: GMP synthase [glutamine-hydrolyzing] (513 aa).

A Glutamine amidotransferase type-1 domain is found at L9–E198. C86 serves as the catalytic Nucleophile. Active-site residues include H172 and E174. A GMPS ATP-PPase domain is found at W199–R388. S226–S232 is an ATP binding site.

In terms of assembly, homodimer.

The catalysed reaction is XMP + L-glutamine + ATP + H2O = GMP + L-glutamate + AMP + diphosphate + 2 H(+). It participates in purine metabolism; GMP biosynthesis; GMP from XMP (L-Gln route): step 1/1. Functionally, catalyzes the synthesis of GMP from XMP. This chain is GMP synthase [glutamine-hydrolyzing], found in Staphylococcus saprophyticus subsp. saprophyticus (strain ATCC 15305 / DSM 20229 / NCIMB 8711 / NCTC 7292 / S-41).